Consider the following 224-residue polypeptide: Menaquinol:cytochrome c reductase cytochrome b subunit (224 aa).

Residues 37-57 (FSAFVYCFGGLTFFVTVIQIL) traverse the membrane as a helical segment. Tyr-42 is a heme b binding site. Residue Cys-43 participates in heme c binding. Residues Arg-91, His-94, His-108, and Arg-111 each contribute to the heme b site. The next 3 membrane-spanning stretches (helical) occupy residues 96-116 (WGASLVIVMMFLHTLRVFFQG), 126-146 (WIVGVLIFMVMMGLGFTGYLL), and 195-215 (IHVFFLPAALLGLMAAHFLMI). Residues His-196 and His-211 each contribute to the heme b site. The heme c site is built by Arg-216 and Ile-220. Heme b is bound at residue Ser-221.

The protein belongs to the cytochrome b family. As to quaternary structure, the main subunits of the menaquinol:cytochrome c complex are a Rieske-type iron-sulfur protein (QcrA), a cytochrome b (QcrB) and a cytochrome c (QcrC). The cofactor is heme b. Heme c is required as a cofactor.

The protein localises to the cell membrane. Functionally, component of the menaquinol:cytochrome c reductase complex. The chain is Menaquinol:cytochrome c reductase cytochrome b subunit (qcrB) from Geobacillus thermodenitrificans.